Consider the following 244-residue polypeptide: Orotidine 5'-phosphate decarboxylase (244 aa).

Substrate is bound by residues Asp20, Lys42, 70-79 (DLKFFDIPAT), Thr125, Arg186, Gln195, Gly215, and Arg216. Lys72 functions as the Proton donor in the catalytic mechanism.

Belongs to the OMP decarboxylase family. Type 1 subfamily. Homodimer.

The enzyme catalyses orotidine 5'-phosphate + H(+) = UMP + CO2. The protein operates within pyrimidine metabolism; UMP biosynthesis via de novo pathway; UMP from orotate: step 2/2. Functionally, catalyzes the decarboxylation of orotidine 5'-monophosphate (OMP) to uridine 5'-monophosphate (UMP). This Xylella fastidiosa (strain M23) protein is Orotidine 5'-phosphate decarboxylase.